A 278-amino-acid polypeptide reads, in one-letter code: NAD-capped RNA hydrolase NudC (278 aa).

Arg84 is a binding site for substrate. Cys114 and Cys117 together coordinate Zn(2+). Position 127 (Glu127) interacts with substrate. Zn(2+) is bound by residues Cys132 and Cys135. Tyr140 is a binding site for substrate. In terms of domain architecture, Nudix hydrolase spans 141-265 (PRLSPSMIVL…IARHLIDLYL (125 aa)). 3 residues coordinate a divalent metal cation: Ala174, Glu190, and Glu194. The Nudix box motif lies at 175-196 (GFVEAGESVEQCVVREVREEVG). 208-215 (QNWPFPHS) is a binding site for substrate. Glu235 serves as a coordination point for a divalent metal cation. Ala257 contacts substrate.

The protein belongs to the Nudix hydrolase family. NudC subfamily. Homodimer. Requires Mg(2+) as cofactor. The cofactor is Mn(2+). It depends on Zn(2+) as a cofactor.

The catalysed reaction is a 5'-end NAD(+)-phospho-ribonucleoside in mRNA + H2O = a 5'-end phospho-adenosine-phospho-ribonucleoside in mRNA + beta-nicotinamide D-ribonucleotide + 2 H(+). The enzyme catalyses NAD(+) + H2O = beta-nicotinamide D-ribonucleotide + AMP + 2 H(+). It carries out the reaction NADH + H2O = reduced beta-nicotinamide D-ribonucleotide + AMP + 2 H(+). Functionally, mRNA decapping enzyme that specifically removes the nicotinamide adenine dinucleotide (NAD) cap from a subset of mRNAs by hydrolyzing the diphosphate linkage to produce nicotinamide mononucleotide (NMN) and 5' monophosphate mRNA. The NAD-cap is present at the 5'-end of some mRNAs and stabilizes RNA against 5'-processing. Has preference for mRNAs with a 5'-end purine. Catalyzes the hydrolysis of a broad range of dinucleotide pyrophosphates. This Pseudomonas aeruginosa (strain ATCC 15692 / DSM 22644 / CIP 104116 / JCM 14847 / LMG 12228 / 1C / PRS 101 / PAO1) protein is NAD-capped RNA hydrolase NudC.